The chain runs to 248 residues: MMTNTAAYQFVTIRDPQTLAASVLAQAEQHALKGSVLVAEEGINLFLAGAAEQIGAFYTWLQADTRFAQMRIKYSESKHQPFARLKVKIKREIISFRRDDASPLQGRAPSVTPAVLRKWLRNGQDDRGRPLVLLDTRNAQEVRYGTFQGALTLPIDKFTDLPGALEPHRAALADATVVSFCTGGIRCEKAALWMQADGMDNVLQLEGGILGYFEEVGGEGYDGRCFVFDERVALDPELNPLVDADRTA.

The 95-residue stretch at 127-221 (RGRPLVLLDT…YFEEVGGEGY (95 aa)) folds into the Rhodanese domain. The Cysteine persulfide intermediate role is filled by Cys-181.

This sequence belongs to the TrhO family.

It carries out the reaction uridine(34) in tRNA + AH2 + O2 = 5-hydroxyuridine(34) in tRNA + A + H2O. Catalyzes oxygen-dependent 5-hydroxyuridine (ho5U) modification at position 34 in tRNAs. The protein is tRNA uridine(34) hydroxylase of Xanthomonas axonopodis pv. citri (strain 306).